Consider the following 335-residue polypeptide: Glycerol-3-phosphate dehydrogenase [NAD(P)+] (335 aa).

NADPH contacts are provided by Trp12 and Lys106. The sn-glycerol 3-phosphate site is built by Lys106, Gly136, and Ser138. NADPH is bound at residue Ala140. Sn-glycerol 3-phosphate contacts are provided by Lys191, Asp244, Ser254, Arg255, and Asn256. The active-site Proton acceptor is Lys191. Residue Arg255 participates in NADPH binding. The NADPH site is built by Val279 and Glu281.

Belongs to the NAD-dependent glycerol-3-phosphate dehydrogenase family.

The protein localises to the cytoplasm. The catalysed reaction is sn-glycerol 3-phosphate + NAD(+) = dihydroxyacetone phosphate + NADH + H(+). It catalyses the reaction sn-glycerol 3-phosphate + NADP(+) = dihydroxyacetone phosphate + NADPH + H(+). Its pathway is membrane lipid metabolism; glycerophospholipid metabolism. Catalyzes the reduction of the glycolytic intermediate dihydroxyacetone phosphate (DHAP) to sn-glycerol 3-phosphate (G3P), the key precursor for phospholipid synthesis. The polypeptide is Glycerol-3-phosphate dehydrogenase [NAD(P)+] (Fusobacterium nucleatum subsp. nucleatum (strain ATCC 25586 / DSM 15643 / BCRC 10681 / CIP 101130 / JCM 8532 / KCTC 2640 / LMG 13131 / VPI 4355)).